The primary structure comprises 351 residues: Flap endonuclease 1 (351 aa).

The segment at 1–98 is N-domain; that stretch reads MDLAELVEEI…QELERRKKVK (98 aa). Residues Asp-27, Asp-80, Glu-154, Glu-156, Asp-175, Asp-177, and Asp-238 each coordinate Mg(2+). The interval 118 to 260 is I-domain; it reads ELKKYAQMSI…TAYRIIKKYG (143 aa). An interaction with PCNA region spans residues 343 to 351; that stretch reads RQTGLDQWF.

It belongs to the XPG/RAD2 endonuclease family. FEN1 subfamily. As to quaternary structure, interacts with PCNA. PCNA stimulates the nuclease activity without altering cleavage specificity. Mg(2+) serves as cofactor.

Its function is as follows. Structure-specific nuclease with 5'-flap endonuclease and 5'-3' exonuclease activities involved in DNA replication and repair. During DNA replication, cleaves the 5'-overhanging flap structure that is generated by displacement synthesis when DNA polymerase encounters the 5'-end of a downstream Okazaki fragment. Binds the unpaired 3'-DNA end and kinks the DNA to facilitate 5' cleavage specificity. Cleaves one nucleotide into the double-stranded DNA from the junction in flap DNA, leaving a nick for ligation. Also involved in the base excision repair (BER) pathway. Acts as a genome stabilization factor that prevents flaps from equilibrating into structures that lead to duplications and deletions. Also possesses 5'-3' exonuclease activity on nicked or gapped double-stranded DNA. The sequence is that of Flap endonuclease 1 from Sulfurisphaera tokodaii (strain DSM 16993 / JCM 10545 / NBRC 100140 / 7) (Sulfolobus tokodaii).